The following is a 204-amino-acid chain: Outer-membrane lipoprotein LolB (204 aa).

The signal sequence occupies residues 1 to 20 (MLRSRRLALLCLATPLWLAA). A lipid anchor (N-palmitoyl cysteine) is attached at C21. C21 is lipidated: S-diacylglycerol cysteine. Positions 131–150 (GRAAPGTPSNVTRDANGRPD) are disordered.

This sequence belongs to the LolB family. Monomer.

It is found in the cell outer membrane. Plays a critical role in the incorporation of lipoproteins in the outer membrane after they are released by the LolA protein. This chain is Outer-membrane lipoprotein LolB, found in Cupriavidus metallidurans (strain ATCC 43123 / DSM 2839 / NBRC 102507 / CH34) (Ralstonia metallidurans).